The following is a 90-amino-acid chain: Probable Fe(2+)-trafficking protein (90 aa).

It belongs to the Fe(2+)-trafficking protein family.

Functionally, could be a mediator in iron transactions between iron acquisition and iron-requiring processes, such as synthesis and/or repair of Fe-S clusters in biosynthetic enzymes. This Coxiella burnetii (strain CbuG_Q212) (Coxiella burnetii (strain Q212)) protein is Probable Fe(2+)-trafficking protein.